The following is a 92-amino-acid chain: Small ribosomal subunit protein bS20 (92 aa).

The tract at residues 1–23 is disordered; sequence MANTTSAKKATRKIARRTDVNKA.

It belongs to the bacterial ribosomal protein bS20 family.

In terms of biological role, binds directly to 16S ribosomal RNA. This Rhizobium leguminosarum bv. trifolii (strain WSM2304) protein is Small ribosomal subunit protein bS20.